A 400-amino-acid chain; its full sequence is Argininosuccinate synthase (400 aa).

ATP is bound at residue 8–16 (AYSGGLDTS). Tyrosine 87 contacts L-citrulline. Glycine 117 is an ATP binding site. Residues threonine 119, asparagine 123, and aspartate 124 each coordinate L-aspartate. Position 123 (asparagine 123) interacts with L-citrulline. Residues arginine 127, serine 175, glutamate 260, and tyrosine 272 each coordinate L-citrulline.

It belongs to the argininosuccinate synthase family. Type 1 subfamily. In terms of assembly, homotetramer.

It localises to the cytoplasm. The enzyme catalyses L-citrulline + L-aspartate + ATP = 2-(N(omega)-L-arginino)succinate + AMP + diphosphate + H(+). It functions in the pathway amino-acid biosynthesis; L-arginine biosynthesis; L-arginine from L-ornithine and carbamoyl phosphate: step 2/3. The protein is Argininosuccinate synthase of Nocardia farcinica (strain IFM 10152).